Reading from the N-terminus, the 167-residue chain is Glucose-6-phosphate isomerase (167 aa).

Glutamate 54 acts as the Proton donor in catalysis. Histidine 85 is a catalytic residue.

The protein belongs to the GPI family.

Its subcellular location is the cytoplasm. It catalyses the reaction alpha-D-glucose 6-phosphate = beta-D-fructose 6-phosphate. Its pathway is carbohydrate biosynthesis; gluconeogenesis. The protein operates within carbohydrate degradation; glycolysis; D-glyceraldehyde 3-phosphate and glycerone phosphate from D-glucose: step 2/4. In terms of biological role, catalyzes the reversible isomerization of glucose-6-phosphate to fructose-6-phosphate. In Klebsiella oxytoca, this protein is Glucose-6-phosphate isomerase.